Here is a 25-residue protein sequence, read N- to C-terminus: Small ribosomal subunit protein eS32B (25 aa).

Residues 1-25 (MRAKWRKKRTRRLKRKRRKVRARSK) form a disordered region.

This sequence belongs to the eukaryotic ribosomal protein eS32 family. Component of the small ribosomal subunit (SSU). Mature yeast ribosomes consist of a small (40S) and a large (60S) subunit. The 40S small subunit contains 1 molecule of ribosomal RNA (18S rRNA) and 33 different proteins (encoded by 57 genes). The large 60S subunit contains 3 rRNA molecules (25S, 5.8S and 5S rRNA) and 46 different proteins (encoded by 81 genes).

It is found in the cytoplasm. Its function is as follows. Component of the ribosome, a large ribonucleoprotein complex responsible for the synthesis of proteins in the cell. The small ribosomal subunit (SSU) binds messenger RNAs (mRNAs) and translates the encoded message by selecting cognate aminoacyl-transfer RNA (tRNA) molecules. The large subunit (LSU) contains the ribosomal catalytic site termed the peptidyl transferase center (PTC), which catalyzes the formation of peptide bonds, thereby polymerizing the amino acids delivered by tRNAs into a polypeptide chain. The nascent polypeptides leave the ribosome through a tunnel in the LSU and interact with protein factors that function in enzymatic processing, targeting, and the membrane insertion of nascent chains at the exit of the ribosomal tunnel. This Saccharomyces cerevisiae (strain ATCC 204508 / S288c) (Baker's yeast) protein is Small ribosomal subunit protein eS32B.